A 385-amino-acid polypeptide reads, in one-letter code: Probable nitrate transporter NarT (385 aa).

Transmembrane regions (helical) follow at residues 14 to 34 (TLSL…MPYI), 47 to 67 (IILA…GYLT), 69 to 89 (IIGA…PIFF), 97 to 117 (GMLM…SVGV), 139 to 159 (GNIG…IIGW), 161 to 181 (TTVR…FIFG), 205 to 225 (LYYL…FGLF), 246 to 266 (GVFI…GDKF), 277 to 297 (IIMI…LFTI), 302 to 322 (ISIC…SYFA), 330 to 350 (GIVS…ITYV), and 359 to 379 (LAFI…GHLY).

Belongs to the major facilitator superfamily. Nitrate/nitrite porter (TC 2.A.1.8) family.

The protein resides in the cell membrane. Functionally, probably required for nitrate uptake under anoxic conditions. Also possibly involved in excretion of nitrite produced by the dissimilatory reduction of nitrate. The polypeptide is Probable nitrate transporter NarT (narT) (Staphylococcus haemolyticus (strain JCSC1435)).